We begin with the raw amino-acid sequence, 285 residues long: Phosphatidylserine decarboxylase proenzyme (285 aa).

Active-site charge relay system; for autoendoproteolytic cleavage activity residues include Asp89, His146, and Ser252. The active-site Schiff-base intermediate with substrate; via pyruvic acid; for decarboxylase activity is Ser252. Residue Ser252 is modified to Pyruvic acid (Ser); by autocatalysis.

Belongs to the phosphatidylserine decarboxylase family. PSD-B subfamily. Prokaryotic type I sub-subfamily. Heterodimer of a large membrane-associated beta subunit and a small pyruvoyl-containing alpha subunit. Requires pyruvate as cofactor. Post-translationally, is synthesized initially as an inactive proenzyme. Formation of the active enzyme involves a self-maturation process in which the active site pyruvoyl group is generated from an internal serine residue via an autocatalytic post-translational modification. Two non-identical subunits are generated from the proenzyme in this reaction, and the pyruvate is formed at the N-terminus of the alpha chain, which is derived from the carboxyl end of the proenzyme. The autoendoproteolytic cleavage occurs by a canonical serine protease mechanism, in which the side chain hydroxyl group of the serine supplies its oxygen atom to form the C-terminus of the beta chain, while the remainder of the serine residue undergoes an oxidative deamination to produce ammonia and the pyruvoyl prosthetic group on the alpha chain. During this reaction, the Ser that is part of the protease active site of the proenzyme becomes the pyruvoyl prosthetic group, which constitutes an essential element of the active site of the mature decarboxylase.

Its subcellular location is the cell membrane. The catalysed reaction is a 1,2-diacyl-sn-glycero-3-phospho-L-serine + H(+) = a 1,2-diacyl-sn-glycero-3-phosphoethanolamine + CO2. It functions in the pathway phospholipid metabolism; phosphatidylethanolamine biosynthesis; phosphatidylethanolamine from CDP-diacylglycerol: step 2/2. In terms of biological role, catalyzes the formation of phosphatidylethanolamine (PtdEtn) from phosphatidylserine (PtdSer). The chain is Phosphatidylserine decarboxylase proenzyme from Vibrio parahaemolyticus serotype O3:K6 (strain RIMD 2210633).